A 462-amino-acid polypeptide reads, in one-letter code: 3-deoxy-D-manno-octulosonic acid transferase (462 aa).

A helical; Signal-anchor membrane pass occupies residues 2–22; that stretch reads MLLYYILSFILLPVYFIIIFI. One can recognise an RPE1 insert domain in the interval 47–90; that stretch reads SLLDLQMSVNQEGFKVDTEHKATSYVYIHRNASLMYKLSLERSY. Catalysis depends on Glu104, which acts as the Proton acceptor. CMP-binding positions include 308-309, 349-351, and 374-377; these read PR, FGE, and NILE.

The protein belongs to the glycosyltransferase group 1 family.

The protein resides in the cell inner membrane. It carries out the reaction lipid IVA (E. coli) + CMP-3-deoxy-beta-D-manno-octulosonate = alpha-Kdo-(2-&gt;6)-lipid IVA (E. coli) + CMP + H(+). The protein operates within bacterial outer membrane biogenesis; LPS core biosynthesis. Functionally, involved in lipopolysaccharide (LPS) biosynthesis. Catalyzes the transfer of 3-deoxy-D-manno-octulosonate (Kdo) residue(s) from CMP-Kdo to lipid IV(A), the tetraacyldisaccharide-1,4'-bisphosphate precursor of lipid A. The chain is 3-deoxy-D-manno-octulosonic acid transferase (waaA) from Rickettsia typhi (strain ATCC VR-144 / Wilmington).